A 154-amino-acid polypeptide reads, in one-letter code: 6,7-dimethyl-8-ribityllumazine synthase (154 aa).

5-amino-6-(D-ribitylamino)uracil-binding positions include phenylalanine 22, 56 to 58, and 80 to 82; these read AFE and AVI. 85 to 86 serves as a coordination point for (2S)-2-hydroxy-3-oxobutyl phosphate; it reads ST. Histidine 88 functions as the Proton donor in the catalytic mechanism. Phenylalanine 113 lines the 5-amino-6-(D-ribitylamino)uracil pocket. Residue arginine 127 coordinates (2S)-2-hydroxy-3-oxobutyl phosphate.

The protein belongs to the DMRL synthase family.

The enzyme catalyses (2S)-2-hydroxy-3-oxobutyl phosphate + 5-amino-6-(D-ribitylamino)uracil = 6,7-dimethyl-8-(1-D-ribityl)lumazine + phosphate + 2 H2O + H(+). Its pathway is cofactor biosynthesis; riboflavin biosynthesis; riboflavin from 2-hydroxy-3-oxobutyl phosphate and 5-amino-6-(D-ribitylamino)uracil: step 1/2. In terms of biological role, catalyzes the formation of 6,7-dimethyl-8-ribityllumazine by condensation of 5-amino-6-(D-ribitylamino)uracil with 3,4-dihydroxy-2-butanone 4-phosphate. This is the penultimate step in the biosynthesis of riboflavin. The sequence is that of 6,7-dimethyl-8-ribityllumazine synthase from Clostridium kluyveri (strain NBRC 12016).